A 68-amino-acid polypeptide reads, in one-letter code: Small ribosomal subunit protein bS21 (68 aa).

It belongs to the bacterial ribosomal protein bS21 family.

The sequence is that of Small ribosomal subunit protein bS21 from Dinoroseobacter shibae (strain DSM 16493 / NCIMB 14021 / DFL 12).